The sequence spans 434 residues: Adenylosuccinate synthetase (434 aa).

GTP is bound by residues 15–21 and 43–45; these read GDEGKGK and GHT. The active-site Proton acceptor is the Asp-16. Mg(2+) is bound by residues Asp-16 and Gly-43. IMP contacts are provided by residues 16 to 19, 41 to 44, Thr-133, Arg-147, Gln-228, Thr-243, and Arg-307; these read DEGK and NAGH. The active-site Proton donor is the His-44. Substrate is bound at residue 303–309; it reads SVTGRAR. GTP is bound by residues Arg-309, 335-337, and 418-420; these read KLD and STG.

It belongs to the adenylosuccinate synthetase family. In terms of assembly, homodimer. Requires Mg(2+) as cofactor.

It localises to the cytoplasm. It catalyses the reaction IMP + L-aspartate + GTP = N(6)-(1,2-dicarboxyethyl)-AMP + GDP + phosphate + 2 H(+). It participates in purine metabolism; AMP biosynthesis via de novo pathway; AMP from IMP: step 1/2. Functionally, plays an important role in the de novo pathway of purine nucleotide biosynthesis. Catalyzes the first committed step in the biosynthesis of AMP from IMP. This Neisseria gonorrhoeae (strain NCCP11945) protein is Adenylosuccinate synthetase.